Reading from the N-terminus, the 192-residue chain is ATP synthase subunit b (192 aa).

A helical membrane pass occupies residues 7 to 27; that stretch reads LLLVLGVMLLATGVALAAGGE.

This sequence belongs to the ATPase B chain family. In terms of assembly, F-type ATPases have 2 components, F(1) - the catalytic core - and F(0) - the membrane proton channel. F(1) has five subunits: alpha(3), beta(3), gamma(1), delta(1), epsilon(1). F(0) has three main subunits: a(1), b(2) and c(10-14). The alpha and beta chains form an alternating ring which encloses part of the gamma chain. F(1) is attached to F(0) by a central stalk formed by the gamma and epsilon chains, while a peripheral stalk is formed by the delta and b chains.

The protein localises to the cell inner membrane. Functionally, f(1)F(0) ATP synthase produces ATP from ADP in the presence of a proton or sodium gradient. F-type ATPases consist of two structural domains, F(1) containing the extramembraneous catalytic core and F(0) containing the membrane proton channel, linked together by a central stalk and a peripheral stalk. During catalysis, ATP synthesis in the catalytic domain of F(1) is coupled via a rotary mechanism of the central stalk subunits to proton translocation. In terms of biological role, component of the F(0) channel, it forms part of the peripheral stalk, linking F(1) to F(0). In Oleidesulfovibrio alaskensis (strain ATCC BAA-1058 / DSM 17464 / G20) (Desulfovibrio alaskensis), this protein is ATP synthase subunit b.